The sequence spans 426 residues: FK506-binding protein 3 (426 aa).

2 disordered regions span residues S37–Q143 and T171–K314. Composition is skewed to acidic residues over residues D65–E94, E111–S131, and Q181–E225. Composition is skewed to basic and acidic residues over residues G226–S257, K264–E278, and V287–K311. A PPIase FKBP-type domain is found at G340–K426.

The protein belongs to the FKBP-type PPIase family. FKBP3/4 subfamily.

It localises to the nucleus. The protein localises to the nucleolus. It catalyses the reaction [protein]-peptidylproline (omega=180) = [protein]-peptidylproline (omega=0). With respect to regulation, inhibited by both FK506 and rapamycin. Functionally, PPIases accelerate the folding of proteins. It catalyzes the cis-trans isomerization of proline imidic peptide bonds in oligopeptides. This is FK506-binding protein 3 (FPR3) from Candida albicans (strain SC5314 / ATCC MYA-2876) (Yeast).